The chain runs to 292 residues: Zinc finger protein OZF (292 aa).

10 consecutive C2H2-type zinc fingers follow at residues 16-38, 44-66, 72-94, 100-122, 128-150, 156-178, 184-206, 212-234, 240-262, and 268-290; these read FACK…EHFH, FECN…QNTH, FECN…QKIH, FECK…QRTH, FVCK…EKIH, FKCS…QNIH, YECN…VRIH, YECN…VRSH, YGCN…LRIH, and YQCS…QKIH. Glycyl lysine isopeptide (Lys-Gly) (interchain with G-Cter in SUMO2) cross-links involve residues Lys-28, Lys-51, and Lys-56. Residues Lys-157 and Lys-169 each participate in a glycyl lysine isopeptide (Lys-Gly) (interchain with G-Cter in SUMO) cross-link. A Glycyl lysine isopeptide (Lys-Gly) (interchain with G-Cter in SUMO2) cross-link involves residue Lys-173. The interaction with TERF2IP stretch occupies residues 212–292; that stretch reads YECNVCGKAF…HIRHQKIHTH (81 aa).

Belongs to the krueppel C2H2-type zinc-finger protein family. In terms of assembly, binds DNA. Interacts with SUMO conjugating enzyme UBC9/UBE2I. Interacts with the telomeric protein TERF2IP. Sumoylated. In terms of tissue distribution, liver, skeletal and heart muscle, mammary cells. Very low levels in brain, lung, placenta and kidney. Strongly overexpressed in many pancreas and colorectal cancers. Increased gene copy numbers are detected in 3 of 12 tumor cell lines and 2 of 12 primary pancreatic carcinomas. Overexpressed in 80% of colorectal cancers.

The protein resides in the nucleus. In Homo sapiens (Human), this protein is Zinc finger protein OZF (ZNF146).